The sequence spans 933 residues: Melanoma-associated antigen E1 (933 aa).

Disordered regions lie at residues 1-113 (MSLV…VSAG), 149-236 (GASI…GINL), 256-282 (SDIS…VQST), and 360-393 (TSGL…EDEN). Residues 8 to 23 (SRRRRGGRANGRKNSG) are compositionally biased toward basic residues. 4 stretches are compositionally biased toward polar residues: residues 64 to 97 (GGSS…QLPT), 149 to 166 (GASI…NVQP), 173 to 184 (GTSVPPTFSEES), and 219 to 236 (APST…GINL). MAGE domains follow at residues 467–666 (MEQN…YNEA) and 721–912 (LESK…YREA). Positions 719–933 (SRLESKSRKL…RRPLVVRNLR (215 aa)) are interaction with DTNA.

Interacts with DTNA. Interacts with TRIM28.

It is found in the cytoplasm. The protein resides in the perinuclear region. Its subcellular location is the nucleus. The protein localises to the cell membrane. In terms of biological role, may enhance ubiquitin ligase activity of RING-type zinc finger-containing E3 ubiquitin-protein ligases. Proposed to act through recruitment and/or stabilization of the Ubl-conjugating enzyme (E2) at the E3:substrate complex. The chain is Melanoma-associated antigen E1 (Magee1) from Rattus norvegicus (Rat).